The primary structure comprises 51 residues: Sperm protamine P1 (51 aa).

Belongs to the protamine P1 family. Cross-linked by interchain disulfide bonds around the DNA-helix. Testis.

Its subcellular location is the nucleus. It localises to the chromosome. Protamines substitute for histones in the chromatin of sperm during the haploid phase of spermatogenesis. They compact sperm DNA into a highly condensed, stable and inactive complex. The protein is Sperm protamine P1 (PRM1) of Pongo pygmaeus (Bornean orangutan).